We begin with the raw amino-acid sequence, 78 residues long: Mu-conotoxin BuIIIB (78 aa).

Positions 1-22 (MMSKLGVLLTICLLLFPLFALP) are cleaved as a signal peptide. Positions 23–51 (QDGDQPADRPAERMQDDISSEQNPLLEKR) are excised as a propeptide. The segment at 26–46 (DQPADRPAERMQDDISSEQNP) is disordered. Basic and acidic residues predominate over residues 28–38 (PADRPAERMQD). Cystine bridges form between Cys-56-Cys-68, Cys-57-Cys-74, and Cys-64-Cys-75. Cys-75 is modified (cysteine amide).

This sequence belongs to the conotoxin M superfamily. As to expression, expressed by the venom duct.

Its subcellular location is the secreted. Functionally, mu-conotoxins block voltage-gated sodium channels (Nav). This synthetic toxin potently blocks rNav1.4/SCN4A (Kd=0.34-3.6 nM), rNav1.2/SCN2A (Kd=13 nM), rNav1.3/SCN3A (Kd=200 nM), rNav1.1/SCN1A (Kd=360 nM), mNav1.6/SCN8A (IC(50)=1.8 uM), rNav1.5/SCN5A (IC(50)=9 uM), rNav1.6/SCN8A (IC(50)&gt;30 uM). It is noteworthy that the toxin is 50-fold more potent on mouse Nav1.6 than on rat Nav1.6. The block of SCN4A is very slowly reversible. The sequence is that of Mu-conotoxin BuIIIB from Conus bullatus (Bubble cone).